The chain runs to 252 residues: 3-dehydroquinate dehydratase (252 aa).

3-dehydroquinate contacts are provided by residues Ser-21, 46-48 (EWR), and Arg-82. His-143 serves as the catalytic Proton donor/acceptor. The Schiff-base intermediate with substrate role is filled by Lys-170. Residues Arg-213, Ser-232, and Gln-236 each coordinate 3-dehydroquinate.

Belongs to the type-I 3-dehydroquinase family. As to quaternary structure, homodimer.

The catalysed reaction is 3-dehydroquinate = 3-dehydroshikimate + H2O. Its pathway is metabolic intermediate biosynthesis; chorismate biosynthesis; chorismate from D-erythrose 4-phosphate and phosphoenolpyruvate: step 3/7. In terms of biological role, involved in the third step of the chorismate pathway, which leads to the biosynthesis of aromatic amino acids. Catalyzes the cis-dehydration of 3-dehydroquinate (DHQ) and introduces the first double bond of the aromatic ring to yield 3-dehydroshikimate. The protein is 3-dehydroquinate dehydratase of Escherichia coli O8 (strain IAI1).